Here is a 209-residue protein sequence, read N- to C-terminus: Thymidine kinase (209 aa).

Residues 9-16 (SAMNAGKT) and 88-91 (DEAQ) contribute to the ATP site. The active-site Proton acceptor is Glu89.

It belongs to the thymidine kinase family. As to quaternary structure, homotetramer.

The protein localises to the cytoplasm. The enzyme catalyses thymidine + ATP = dTMP + ADP + H(+). The chain is Thymidine kinase from Xanthomonas axonopodis pv. citri (strain 306).